The following is a 238-amino-acid chain: MSDLQTQMKQAVAEAAVAQIRDGMVVGLGSGSTAALMIEGLGARLAAGQLRDIVGVTTSFQGEVLAAELGIPLRALNATDRIDLAIDGADEVDPSFQLIKGGGACHVQEKLVADRAERFIVVVDSTKLVRCLNLDFLLPVEVLPGAWVQVQSRLKSMGGVAELRMATRKAGPVVTDQGNLVLDVRFENGISDPIALERDINNLPGVLENGLFVNLADEVLVGEIKDGVAGVRSLDRVG.

Substrate contacts are provided by residues 30–33 (SGST), 87–90 (DGAD), and 100–103 (KGGG). The active-site Proton acceptor is the Glu-109. Lys-127 lines the substrate pocket.

It belongs to the ribose 5-phosphate isomerase family. Homodimer.

It carries out the reaction aldehydo-D-ribose 5-phosphate = D-ribulose 5-phosphate. Its pathway is carbohydrate degradation; pentose phosphate pathway; D-ribose 5-phosphate from D-ribulose 5-phosphate (non-oxidative stage): step 1/1. Functionally, catalyzes the reversible conversion of ribose-5-phosphate to ribulose 5-phosphate. This Synechococcus sp. (strain CC9311) protein is Ribose-5-phosphate isomerase A.